The chain runs to 199 residues: ATP-dependent Clp protease proteolytic subunit (199 aa).

Ser-102 functions as the Nucleophile in the catalytic mechanism. The active site involves His-127.

Belongs to the peptidase S14 family. As to quaternary structure, component of the chloroplastic Clp protease core complex.

The protein localises to the plastid. It is found in the chloroplast stroma. The enzyme catalyses Hydrolysis of proteins to small peptides in the presence of ATP and magnesium. alpha-casein is the usual test substrate. In the absence of ATP, only oligopeptides shorter than five residues are hydrolyzed (such as succinyl-Leu-Tyr-|-NHMec, and Leu-Tyr-Leu-|-Tyr-Trp, in which cleavage of the -Tyr-|-Leu- and -Tyr-|-Trp bonds also occurs).. Cleaves peptides in various proteins in a process that requires ATP hydrolysis. Has a chymotrypsin-like activity. Plays a major role in the degradation of misfolded proteins. This is ATP-dependent Clp protease proteolytic subunit from Physcomitrium patens (Spreading-leaved earth moss).